The following is a 282-amino-acid chain: Bifunctional protein FolD (282 aa).

Residues 166–168 (GAS) and Ile232 contribute to the NADP(+) site.

This sequence belongs to the tetrahydrofolate dehydrogenase/cyclohydrolase family. Homodimer.

It catalyses the reaction (6R)-5,10-methylene-5,6,7,8-tetrahydrofolate + NADP(+) = (6R)-5,10-methenyltetrahydrofolate + NADPH. The enzyme catalyses (6R)-5,10-methenyltetrahydrofolate + H2O = (6R)-10-formyltetrahydrofolate + H(+). It functions in the pathway one-carbon metabolism; tetrahydrofolate interconversion. Its function is as follows. Catalyzes the oxidation of 5,10-methylenetetrahydrofolate to 5,10-methenyltetrahydrofolate and then the hydrolysis of 5,10-methenyltetrahydrofolate to 10-formyltetrahydrofolate. The chain is Bifunctional protein FolD from Histophilus somni (strain 129Pt) (Haemophilus somnus).